Consider the following 501-residue polypeptide: Cytochrome P450 monooxygenase notH (501 aa).

Residues 11 to 31 (LGLESVGWVLGLLTTSILYLF) traverse the membrane as a helical segment. Asparagine 298 is a glycosylation site (N-linked (GlcNAc...) asparagine). Cysteine 442 serves as a coordination point for heme.

This sequence belongs to the cytochrome P450 family. The cofactor is heme.

The protein resides in the membrane. It participates in alkaloid biosynthesis. Functionally, cytochrome P450 monooxygenase; part of the gene cluster that mediates the biosynthesis of notoamide, a fungal indole alkaloid that belongs to a family of natural products containing a characteristic bicyclo[2.2.2]diazaoctane core. The first step of notoamide biosynthesis involves coupling of L-proline and L-tryptophan by the bimodular NRPS notE, to produce cyclo-L-tryptophan-L-proline called brevianamide F. The reverse prenyltransferase notF then acts as a deoxybrevianamide E synthase and converts brevianamide F to deoxybrevianamide E via reverse prenylation at C-2 of the indole ring leading to the bicyclo[2.2.2]diazaoctane core. Deoxybrevianamide E is further hydroxylated at C-6 of the indole ring, likely catalyzed by the cytochrome P450 monooxygenase notG, to yield 6-hydroxy-deoxybrevianamide E. 6-hydroxy-deoxybrevianamide E is a specific substrate of the prenyltransferase notC for normal prenylation at C-7 to produce 6-hydroxy-7-prenyl-deoxybrevianamide, also called notoamide S. As the proposed pivotal branching point in notoamide biosynthesis, notoamide S can be diverted to notoamide E through an oxidative pyran ring closure putatively catalyzed by either notH cytochrome P450 monooxygenase or the notD FAD-linked oxidoreductase. This step would be followed by an indole 2,3-epoxidation-initiated pinacol-like rearrangement catalyzed by the notB FAD-dependent monooxygenase leading to the formation of notoamide C and notoamide D. On the other hand notoamide S is converted to notoamide T by notH (or notD), a bifunctional oxidase that also functions as the intramolecular Diels-Alderase responsible for generation of (+)-notoamide T. To generate antipodal (-)-notoaminide T, notH' (or notD') in Aspergillus versicolor is expected to catalyze a Diels-Alder reaction leading to the opposite stereochemistry. The remaining oxidoreductase notD (or notH) likely catalyzes the oxidative pyran ring formation to yield (+)-stephacidin A. The FAD-dependent monooxygenase notI is highly similar to notB and is predicted to catalyze a similar conversion from (+)-stephacidin A to (-)-notoamide B via the 2,3-epoxidation of (+)-stephacidin A followed by a pinacol-type rearrangement. Finally, it remains unclear which enzyme could be responsible for the final hydroxylation steps leading to notoamide A and sclerotiamide. The chain is Cytochrome P450 monooxygenase notH from Aspergillus sp. (strain MF297-2).